Reading from the N-terminus, the 545-residue chain is Methionine--tRNA ligase (545 aa).

Residues 13–23 (PYANGEIHLGH) carry the 'HIGH' region motif. The Zn(2+) site is built by Cys144, Cys147, Cys157, and Cys160. Residues 329 to 333 (KMSKS) carry the 'KMSKS' region motif. Lys332 provides a ligand contact to ATP.

The protein belongs to the class-I aminoacyl-tRNA synthetase family. MetG type 1 subfamily. As to quaternary structure, monomer. Requires Zn(2+) as cofactor.

The protein resides in the cytoplasm. The enzyme catalyses tRNA(Met) + L-methionine + ATP = L-methionyl-tRNA(Met) + AMP + diphosphate. Is required not only for elongation of protein synthesis but also for the initiation of all mRNA translation through initiator tRNA(fMet) aminoacylation. In Vesicomyosocius okutanii subsp. Calyptogena okutanii (strain HA), this protein is Methionine--tRNA ligase.